We begin with the raw amino-acid sequence, 117 residues long: UPF0342 protein lmo2223 (117 aa).

This sequence belongs to the UPF0342 family.

The sequence is that of UPF0342 protein lmo2223 from Listeria monocytogenes serovar 1/2a (strain ATCC BAA-679 / EGD-e).